Consider the following 522-residue polypeptide: Biotin-dependent long chain acyl-coenzyme A carboxylase beta4 subunit (522 aa).

Residues T11 to N261 form the CoA carboxyltransferase N-terminal domain. The region spanning G270 to L503 is the CoA carboxyltransferase C-terminal domain.

This sequence belongs to the AccD/PCCB family. As to quaternary structure, the biotin-dependent long-chain acyl-CoA carboxylase (LCC) complex is composed of AccA3, which contains the biotin carboxylase (BC) and biotin carboxyl carrier protein (BCCP) domains, and AccD4, which contains the carboxyl transferase (CT) domain. The complex also contains the beta5 subunit AccD5 and the epsilon subunit AccE5. The four subunits are essential for activity, but AccD5, together with AccE5, probably plays a structural role rather than a catalytic one.

Component of a biotin-dependent acyl-CoA carboxylase complex. This subunit transfers the CO2 from carboxybiotin to the CoA ester substrate. When associated with the alpha3 subunit AccA3, the beta5 subunit AccD5 and the epsilon subunit AccE5, forms the LCC complex, which is involved in the carboxylation of long chain acyl-CoA. The LCC complex can use C16-C24 substrates, the highest specific activity is obtained with carboxy-C20-CoA. Has low activity with acetyl-CoA and propionyl-CoA. This is Biotin-dependent long chain acyl-coenzyme A carboxylase beta4 subunit from Mycobacterium tuberculosis (strain ATCC 25618 / H37Rv).